Here is a 514-residue protein sequence, read N- to C-terminus: ATP synthase subunit alpha (514 aa).

Residue 170–177 (GDRQTGKT) participates in ATP binding.

The protein belongs to the ATPase alpha/beta chains family. As to quaternary structure, F-type ATPases have 2 components, CF(1) - the catalytic core - and CF(0) - the membrane proton channel. CF(1) has five subunits: alpha(3), beta(3), gamma(1), delta(1), epsilon(1). CF(0) has three main subunits: a(1), b(2) and c(9-12). The alpha and beta chains form an alternating ring which encloses part of the gamma chain. CF(1) is attached to CF(0) by a central stalk formed by the gamma and epsilon chains, while a peripheral stalk is formed by the delta and b chains.

Its subcellular location is the cell inner membrane. It carries out the reaction ATP + H2O + 4 H(+)(in) = ADP + phosphate + 5 H(+)(out). Its function is as follows. Produces ATP from ADP in the presence of a proton gradient across the membrane. The alpha chain is a regulatory subunit. In Psychrobacter cryohalolentis (strain ATCC BAA-1226 / DSM 17306 / VKM B-2378 / K5), this protein is ATP synthase subunit alpha.